The sequence spans 270 residues: Phosphonates import ATP-binding protein PhnC 1 (270 aa).

Positions 2–245 constitute an ABC transporter domain; sequence LVVEGLTCRF…IARELYDLEA (244 aa). 34-41 serves as a coordination point for ATP; it reads GRSGAGKS.

Belongs to the ABC transporter superfamily. Phosphonates importer (TC 3.A.1.9.1) family. In terms of assembly, the complex is composed of two ATP-binding proteins (PhnC), two transmembrane proteins (PhnE) and a solute-binding protein (PhnD).

The protein localises to the cell inner membrane. The catalysed reaction is phosphonate(out) + ATP + H2O = phosphonate(in) + ADP + phosphate + H(+). Its function is as follows. Part of the ABC transporter complex PhnCDE involved in phosphonates import. Responsible for energy coupling to the transport system. This Rhodopseudomonas palustris (strain ATCC BAA-98 / CGA009) protein is Phosphonates import ATP-binding protein PhnC 1.